Here is a 142-residue protein sequence, read N- to C-terminus: MAKGKYAANILKQTRKDARWKDTYYGRRVLGLNVKADPLGGAPQGRGIVLEKVGVEAKQPNSAIRKCVRIQLIKNGRQVTAFCPGDGAVNFIDEHDEVTVERIGGRMGGAMGDIPGVRFKVIAVNNVSLNQLVIGRLEKPRR.

The protein belongs to the universal ribosomal protein uS12 family. In terms of assembly, part of the 30S ribosomal subunit.

Functionally, with S4 and S5 plays an important role in translational accuracy. Located at the interface of the 30S and 50S subunits. The chain is Small ribosomal subunit protein uS12 from Methanosarcina mazei (strain ATCC BAA-159 / DSM 3647 / Goe1 / Go1 / JCM 11833 / OCM 88) (Methanosarcina frisia).